The primary structure comprises 97 residues: Co-chaperonin GroES (97 aa).

Belongs to the GroES chaperonin family. In terms of assembly, heptamer of 7 subunits arranged in a ring. Interacts with the chaperonin GroEL.

The protein resides in the cytoplasm. Its function is as follows. Together with the chaperonin GroEL, plays an essential role in assisting protein folding. The GroEL-GroES system forms a nano-cage that allows encapsulation of the non-native substrate proteins and provides a physical environment optimized to promote and accelerate protein folding. GroES binds to the apical surface of the GroEL ring, thereby capping the opening of the GroEL channel. This chain is Co-chaperonin GroES, found in Arthrobacter sp. (strain FB24).